Consider the following 67-residue polypeptide: Large ribosomal subunit protein bL35 (67 aa).

Belongs to the bacterial ribosomal protein bL35 family.

This Methylorubrum populi (strain ATCC BAA-705 / NCIMB 13946 / BJ001) (Methylobacterium populi) protein is Large ribosomal subunit protein bL35.